We begin with the raw amino-acid sequence, 152 residues long: Small ribosomal subunit protein uS19z (152 aa).

The protein belongs to the universal ribosomal protein uS19 family.

The protein localises to the cytoplasm. The sequence is that of Small ribosomal subunit protein uS19z (RPS15B) from Arabidopsis thaliana (Mouse-ear cress).